A 1070-amino-acid polypeptide reads, in one-letter code: MEGKKKRPLFFLLVLLLSHKANNVLFERMNGILLLECENEYVKNENGYKLATGHHYMDNDQIERWLQGTDRSRRVKIEENVKYKYNVEELNTKYEQMKGKRINRILKESTYEAQNVADNNYIDDKANGEYKTDNKTNKGEGARNMVMLDYDISGSGQPDGIIDNVVELLTEDEGNFLKNSSKGDDHPYRMKRKEKMSSGAINQIFLQNNVMDKCNDKRKRGERDWDCPTEKDVCIPDRRYQLCMMEITNLVDTDTHFHSDIIFRKSYSRRRLIYDVGGRGDLLLKKYNNVYSEDLCKDIKWSLQDFGDIIMGTDMEGIGYSLVVQNNLRSIFGTGTSAELDRKKWWNDHKKDIWKAMILSVKEKNRYSAWNCKEDVQIKVEPQIYRWIREWGRDYMSEFREQRRKLNEKCEDKLYYSTMLICTLPPCNNACKSYDEWITGKKKQWDVLSTKFSSVKKAQKIETENIARAYDILKQELNGFNEVTFENEINKRDKLYNYFCVCIVQEARKNTQENVKNVGSGVESKAPSSNPINEAVKSSSGEGKVQEDSAHRSVNEGEGKSSTNEADPGSQPGGPASRSVDEKAGVPALSAGQGHDKVPPAEAAATESAVPHSADKTPITATEENKQRTQVDGVAGGDGKAPGPTVSSDVPSVGGKDSGPSTPASHLAGENGEVHNGTDTEPKEDGEKADPQKNIEVKGKQDTDDRSQGSLGPHTDERASLGETHMEKDTETTGGSTLTPEQNVSVASDNGNVPGSGNKQNEGATALSGAESLESSESVHKTIDNTTHGLENKNGGNEKDFQKHDFMNNDMLNDQTSSDHTSSDQTSSDQTSSDQTSSDQTSSDQTSSDQTSSDQTSSDQTIDTEGHHRDNVRNPEIKSSEDMSKGDFMRNSNSNELYSHNNLNNRKLNRDQYEHRDVKATREKIILMSEVNKCNNRTSLKYCNTIEDRMLSSTCSRERSKNLCCSISDFCLNYFELYSYEFYNCMKKEFEDPSYECFTKGSSTGIVYFATGGAFLIILLLFASWNAASNDYEEEATFDEFEEYCYNIHRTPQMPNDIEHMQQFTPLDYS.

Residues 1–21 (MEGKKKRPLFFLLVLLLSHKA) form the signal peptide. Residues 22-1003 (NNVLFERMNG…SYECFTKGSS (982 aa)) are Extracellular-facing. Asn134 and Asn179 each carry an N-linked (GlcNAc...) asparagine glycan. 2 disulfide bridges follow: Cys214-Cys243 and Cys227-Cys234. A Cell attachment site motif is present at residues 279 to 281 (RGD). Cystine bridges form between Cys296-Cys372, Cys410-Cys427, Cys422-Cys502, and Cys431-Cys500. Residues 518–912 (VGSGVESKAP…LNNRKLNRDQ (395 aa)) form a disordered region. Residues 526–541 (APSSNPINEAVKSSSG) are compositionally biased toward polar residues. Basic and acidic residues-rich tracts occupy residues 544–559 (KVQE…EGEG), 672–707 (GEVH…DDRS), and 714–731 (HTDE…KDTE). Residue Asn676 is glycosylated (N-linked (GlcNAc...) asparagine). The span at 732-763 (TTGGSTLTPEQNVSVASDNGNVPGSGNKQNEG) shows a compositional bias: polar residues. A glycan (N-linked (GlcNAc...) asparagine) is linked at Asn743. Residues 766–776 (ALSGAESLESS) show a composition bias toward low complexity. N-linked (GlcNAc...) asparagine glycosylation is present at Asn785. The span at 796-807 (GNEKDFQKHDFM) shows a compositional bias: basic and acidic residues. Low complexity predominate over residues 814–863 (DQTSSDHTSSDQTSSDQTSSDQTSSDQTSSDQTSSDQTSSDQTSSDQTID). Over residues 864 to 888 (TEGHHRDNVRNPEIKSSEDMSKGDF) the composition is skewed to basic and acidic residues. Residues 890–906 (RNSNSNELYSHNNLNNR) are compositionally biased toward polar residues. N-linked (GlcNAc...) asparagine glycosylation is present at Asn936. A helical membrane pass occupies residues 1004–1025 (TGIVYFATGGAFLIILLLFASW). At 1026-1070 (NAASNDYEEEATFDEFEEYCYNIHRTPQMPNDIEHMQQFTPLDYS) the chain is on the cytoplasmic side.

It is found in the membrane. Functionally, binds to Neu5Gc-sialylated receptors on macaque erythrocytes. In Plasmodium knowlesi, this protein is Duffy receptor gamma form.